Consider the following 718-residue polypeptide: MESLRTEQMLSLPAEVSSNNLEPAERGASAAQVDMGPHREAAAESPAPLPTREPEQEQSPGTSTPESKVLLTQADALASRGRIREALEVYRQLSERQQLVAEQLEQLVRCLAEKVPQGEALAPAPPGEGSTASGAVAAEETGAAAAAAATEVWDGFKCRKCHGFLSDPVSLSCGHTFCKLCLERGRAADRRCALCGVKLSALMVATGRARGSRRAGQQPPPPLRVNVVLSGLLGKLFPGPARASQLRHEGNRLYRERQVEAALLKYNEAVKLAPNDHLLYSNRSQIYFTLESHENALHDAEIACKLRPMGFKDNLELPHCSSQEEAAARGDGSSLMDPAKVKGDGQQHHMKDQEEEEEKWDATSPKAASSKTGKCQEKKRKHCQIESQEDTGMPNKASKQDPPTDQGDKPALSLPLASFDASDLECALCMRLFYEPVTTPCGHTFCLKCLERCLDHNAKCPLCKDGLSQCLASRKYSKNVIMEELIAKFLPEELKERRKLYEEEMEELSNLNKNVPIFVCTMAYPTVPCPLHIFEPCYRLMIRRCIETGTRQFGMCLGDPVKGFAEYGCILEIRNVQFFADGRSVVDSIGKRRFRVLHQSQRDGYNTADIEYIEDQKVQGEDCAELMGLHNCVYQQASLWFHSLKSSLKNRILNHFGPMPEKDADPQMNPNGPAWCWWMLAVLPLESRAQLPFLAMRSLKDRLNGIRRVLAFISRNQN.

Residues 1 to 69 (MESLRTEQML…PGTSTPESKV (69 aa)) form a disordered region. A compositionally biased stretch (polar residues) spans 57 to 66 (EQSPGTSTPE). The stretch at 67–100 (SKVLLTQADALASRGRIREALEVYRQLSERQQLV) is one TPR 1 repeat. The RING-type 1 zinc-finger motif lies at 158–196 (CRKCHGFLSDPVSLSCGHTFCKLCLERGRAADRRCALCG). TPR repeat units lie at residues 243–276 (ASQL…APND) and 278–310 (LLYS…RPMG). The tract at residues 322 to 413 (SQEEAAARGD…TDQGDKPALS (92 aa)) is disordered. A compositionally biased stretch (basic and acidic residues) spans 339-352 (AKVKGDGQQHHMKD). The segment at 426-464 (CALCMRLFYEPVTTPCGHTFCLKCLERCLDHNAKCPLCK) adopts an RING-type 2 zinc-finger fold. Residues 505 to 714 (MEELSNLNKN…GIRRVLAFIS (210 aa)) enclose the Lon N-terminal domain.

The sequence is that of LON peptidase N-terminal domain and RING finger protein 3 (LONRF3) from Macaca fascicularis (Crab-eating macaque).